A 345-amino-acid polypeptide reads, in one-letter code: Putative membrane protein ORF59 (345 aa).

The next 4 membrane-spanning stretches (helical) occupy residues 46 to 63 (LVFA…MMLI), 101 to 118 (IVFV…LVFL), 147 to 165 (IFGI…FSIL), and 265 to 286 (VVPV…WMVI).

The protein localises to the membrane. This Ictalurid herpesvirus 1 (strain Auburn) (IcHV-1) protein is Putative membrane protein ORF59 (ORF59).